The sequence spans 645 residues: Cytoplasmic dynein 1 intermediate chain 1 (645 aa).

Composition is skewed to basic and acidic residues over residues 1–13 and 20–58; these read MSDK…ELER and QIRE…KRRE. Disordered regions lie at residues 1–58 and 96–125; these read MSDK…KRRE and MSPS…RTLQ. Residue S2 is modified to N-acetylserine. Residues 2 to 123 form an interaction with DCTN1 region; it reads SDKSDLKAEL…SGDLGPLTRT (122 aa). Residues S50 and S100 each carry the phosphoserine modification. The span at 96 to 107 shows a compositional bias: low complexity; that stretch reads MSPSSKSVSTPS. Position 105 is a phosphothreonine (T105). A phosphoserine mark is found at S107, S111, and S114. Residues 147–163 are interaction with DYNLT1; the sequence is KLGVSKVTQVDFLPREV. The tract at residues 169–221 is disordered; the sequence is ETQTPLATHQSEEDEEDEEMVESKVGQDSELENQDKKQEVKEAPPRELTEEEK. Position 176 is a phosphothreonine (T176). Residues S179 and S197 each carry the phosphoserine modification. Over residues 189–221 the composition is skewed to basic and acidic residues; it reads VESKVGQDSELENQDKKQEVKEAPPRELTEEEK. WD repeat units lie at residues 285–334, 338–378, 387–428, 437–477, 482–527, 530–570, and 576–615; these read SKHR…TTPE, HCQS…RTPV, AHTH…TPQE, SKPV…AGIG, GHQG…PLYS, DNAD…EVPT, and EGAS…VPHN. S635 carries the post-translational modification Phosphoserine.

The protein belongs to the dynein intermediate chain family. As to quaternary structure, homodimer. The cytoplasmic dynein 1 complex consists of two catalytic heavy chains (HCs) and a number of non-catalytic subunits presented by intermediate chains (ICs), light intermediate chains (LICs) and light chains (LCs); the composition seems to vary in respect to the IC, LIC and LC composition. The heavy chain homodimer serves as a scaffold for the probable homodimeric assembly of the respective non-catalytic subunits. The ICs and LICs bind directly to the HC dimer and the LCs assemble on the IC dimer. Interacts with DYNC1H1. Interacts with DYNLT1 and DYNLT3. Interacts with DCTN1. Interacts with MCRS1; the interaction is required for the proper distribution of centriolar satellites.

The protein localises to the cytoplasm. It localises to the chromosome. It is found in the centromere. The protein resides in the kinetochore. Its subcellular location is the cytoskeleton. The protein localises to the spindle pole. Its function is as follows. Acts as one of several non-catalytic accessory components of the cytoplasmic dynein 1 complex that are thought to be involved in linking dynein to cargos and to adapter proteins that regulate dynein function. Cytoplasmic dynein 1 acts as a motor for the intracellular retrograde motility of vesicles and organelles along microtubules. The intermediate chains mediate the binding of dynein to dynactin via its 150 kDa component (p150-glued) DCTN1. May play a role in mediating the interaction of cytoplasmic dynein with membranous organelles and kinetochores. The sequence is that of Cytoplasmic dynein 1 intermediate chain 1 (DYNC1I1) from Homo sapiens (Human).